The sequence spans 282 residues: tRNA (guanine-N(7)-)-methyltransferase (282 aa).

The tract at residues 1 to 36 (MAGPPNKKQKREDYRTARENGEESKELPKKKFYRQR) is disordered. The segment covering 10–29 (KREDYRTARENGEESKELPK) has biased composition (basic and acidic residues). S-adenosyl-L-methionine contacts are provided by residues Gly-100, 123-124 (EI), 158-159 (NT), and Cys-178. Residue Asp-181 is part of the active site. Position 256–258 (256–258 (TEE)) interacts with S-adenosyl-L-methionine.

The protein belongs to the class I-like SAM-binding methyltransferase superfamily. TrmB family. In terms of assembly, forms a complex with trm82.

It localises to the nucleus. The catalysed reaction is guanosine(46) in tRNA + S-adenosyl-L-methionine = N(7)-methylguanosine(46) in tRNA + S-adenosyl-L-homocysteine. It participates in tRNA modification; N(7)-methylguanine-tRNA biosynthesis. Its function is as follows. Catalyzes the formation of N(7)-methylguanine at position 46 (m7G46) in tRNA. In Botryotinia fuckeliana (strain B05.10) (Noble rot fungus), this protein is tRNA (guanine-N(7)-)-methyltransferase (trm8).